A 370-amino-acid polypeptide reads, in one-letter code: MANKLIGEMGLHTKISNIFAARNIITAKDALSMTEFELMELLDVGMKEIRSAISFISEATSPPCQSARSLLEKKVENEHLSGHLPTHLKGLDDTLCGGIPFGVLTELVGPPGIGKSQFCMKLALSASFPVAYGGLDGRVIYIDVESKFSSRRVIEMGLESFPEVFHLKGMAQEMAGRILVLRPTSLANFTESIQELKNSILQNQVKLLVIDSMTALLSGENKPGAQRQPQLGWHISFLKSLAEFSRIPIVVTNQVRSQNRDETSQYSFQAKVKDEFKDNTKTYDSHLVAALGINWAHAVTIRLVLEAKSGQRIIKVAKSPMSPPLAFPFHITSAGISLLSDNGTELKGPGINTIHARGHSDMINFHGDCS.

109 to 116 contacts ATP; it reads GPPGIGKS.

The protein belongs to the RecA family. RAD51 subfamily. In terms of tissue distribution, preferentially expressed in flower buds and roots.

It localises to the nucleus. May be involved in the homologous recombination repair (HRR) pathway of double-stranded DNA breaks arising during DNA replication or induced by DNA-damaging agents. This Arabidopsis thaliana (Mouse-ear cress) protein is DNA repair protein RAD51 homolog 2 (RAD51B).